The chain runs to 554 residues: Glucose-6-phosphate isomerase (554 aa).

The active-site Proton donor is E358. Active-site residues include H389 and K515. The segment covering 527–540 has biased composition (polar residues); the sequence is ANNSPAPQSDSSTD. The disordered stretch occupies residues 527–554; the sequence is ANNSPAPQSDSSTDALVRRYRSERGRTS. Residues 542–554 show a composition bias toward basic and acidic residues; it reads LVRRYRSERGRTS.

Belongs to the GPI family.

It localises to the cytoplasm. The catalysed reaction is alpha-D-glucose 6-phosphate = beta-D-fructose 6-phosphate. It participates in carbohydrate biosynthesis; gluconeogenesis. Its pathway is carbohydrate degradation; glycolysis; D-glyceraldehyde 3-phosphate and glycerone phosphate from D-glucose: step 2/4. In terms of biological role, catalyzes the reversible isomerization of glucose-6-phosphate to fructose-6-phosphate. The protein is Glucose-6-phosphate isomerase of Mycolicibacterium paratuberculosis (strain ATCC BAA-968 / K-10) (Mycobacterium paratuberculosis).